Here is a 440-residue protein sequence, read N- to C-terminus: Chromosome partition protein MukF (440 aa).

A leucine-zipper region spans residues 208 to 236 (LSETSGTLRELQDTLEAAGDKLQANLLRI).

Belongs to the MukF family. In terms of assembly, interacts, and probably forms a ternary complex, with MukE and MukB via its C-terminal region. The complex formation is stimulated by calcium or magnesium. It is required for an interaction between MukE and MukB.

The protein resides in the cytoplasm. Its subcellular location is the nucleoid. Its function is as follows. Involved in chromosome condensation, segregation and cell cycle progression. May participate in facilitating chromosome segregation by condensation DNA from both sides of a centrally located replisome during cell division. Not required for mini-F plasmid partitioning. Probably acts via its interaction with MukB and MukE. Overexpression results in anucleate cells. It has a calcium binding activity. The polypeptide is Chromosome partition protein MukF (Escherichia coli O9:H4 (strain HS)).